The primary structure comprises 181 residues: Probable cobalt-precorrin-6B C(15)-methyltransferase (decarboxylating) (181 aa).

S-adenosyl-L-methionine contacts are provided by residues T16, 40–44 (GCGSG), D61, and A89.

Belongs to the methyltransferase superfamily. Archaeal-type CbiT family.

It catalyses the reaction Co-precorrin-6B + S-adenosyl-L-methionine = Co-precorrin-7 + S-adenosyl-L-homocysteine + CO2. The protein operates within cofactor biosynthesis; adenosylcobalamin biosynthesis; cob(II)yrinate a,c-diamide from sirohydrochlorin (anaerobic route): step 8/10. Its function is as follows. Catalyzes the methylation of C-15 in cobalt-precorrin-6B followed by the decarboxylation of C-12 to form cobalt-precorrin-7. The sequence is that of Probable cobalt-precorrin-6B C(15)-methyltransferase (decarboxylating) from Methanococcus maripaludis (strain C6 / ATCC BAA-1332).